The chain runs to 51 residues: Insulin (51 aa).

3 cysteine pairs are disulfide-bonded: Cys7-Cys37, Cys19-Cys50, and Cys36-Cys41.

This sequence belongs to the insulin family. As to quaternary structure, heterodimer of a B chain and an A chain linked by two disulfide bonds.

It localises to the secreted. Its function is as follows. Insulin decreases blood glucose concentration. It increases cell permeability to monosaccharides, amino acids and fatty acids. It accelerates glycolysis, the pentose phosphate cycle, and glycogen synthesis in liver. The sequence is that of Insulin (INS) from Saimiri sciureus (Common squirrel monkey).